Here is a 580-residue protein sequence, read N- to C-terminus: Isocitrate lyase (580 aa).

106-108 (SGW) provides a ligand contact to substrate. D177 contributes to the Mg(2+) binding site. C215 (proton acceptor) is an active-site residue. Residues 216 to 217 (GH), R252, 441 to 445 (NLSPS), and T476 each bind substrate. The Microbody targeting signal motif lies at 578–580 (SRM).

Belongs to the isocitrate lyase/PEP mutase superfamily. Isocitrate lyase family. As to quaternary structure, homotetramer. Mg(2+) is required as a cofactor.

The protein localises to the glyoxysome. The catalysed reaction is D-threo-isocitrate = glyoxylate + succinate. Its pathway is carbohydrate metabolism; glyoxylate cycle; (S)-malate from isocitrate: step 1/2. In terms of biological role, involved in storage lipid mobilization during the growth of higher plant seedling. The sequence is that of Isocitrate lyase (ICL 8) from Pinus taeda (Loblolly pine).